Here is a 128-residue protein sequence, read N- to C-terminus: Large ribosomal subunit protein bL17 (128 aa).

This sequence belongs to the bacterial ribosomal protein bL17 family. As to quaternary structure, part of the 50S ribosomal subunit. Contacts protein L32.

In Streptococcus sanguinis (strain SK36), this protein is Large ribosomal subunit protein bL17.